The chain runs to 288 residues: MAFRQALQLAACGLAGGSAAVLFSAVAVGKPRGGGDADTRATEPPAWTGARAGRGVWDTNWDRREPLSLINLKKRNVESGEDELTSRLDHYKAKATRHIFLIRHSQYHVDGSLEKDRTLTPLGREQAELTGLRLASLGLKFNKIVHSSMTRAVETTDIISKHLPGVSRVSTDLLREGAPIEPDPPVSHWKPEAVQYYEDGARIEAAFRNYIHRADARQEEDSYEIFICHANVIRYIVCRALQFPPEGWLRLSLNNGSITHLVIRPNGRVALRTLGDTGFMPPDKITRS.

At 1–6 (MAFRQA) the chain is on the mitochondrial matrix side. A helical transmembrane segment spans residues 7 to 29 (LQLAACGLAGGSAAVLFSAVAVG). Topologically, residues 30-288 (KPRGGGDADT…FMPPDKITRS (259 aa)) are mitochondrial intermembrane. The interval 76 to 81 (NVESGE) is interaction with KEAP1. Residues Ser79 and Ser86 each carry the phosphoserine modification. N6-acetyllysine occurs at positions 115, 143, and 190.

It belongs to the phosphoglycerate mutase family. BPG-dependent PGAM subfamily. Dimer. Forms a ternary complex with NFE2L2 and KEAP1. Interacts with BCL2L1 and MAP3K5. Upon TNF-induced necrosis, forms in complex with RIPK1, RIPK3 and MLKL; the formation of this complex leads to PGAM5 phosphorylation. Isoform 2, but not isoform 1, interacts with DNM1L; this interaction leads to DNM1L dephosphorylation and activation and eventually to mitochondria fragmentation. Phosphorylated by the RIPK1/RIPK3 complex under necrotic conditions. This phosphorylation increases PGAM5 phosphatase activity. In terms of processing, proteolytically cleaved by PARL in response to loss of mitochondrial membrane potential.

It localises to the mitochondrion outer membrane. It is found in the mitochondrion inner membrane. The enzyme catalyses O-phospho-L-seryl-[protein] + H2O = L-seryl-[protein] + phosphate. The catalysed reaction is O-phospho-L-threonyl-[protein] + H2O = L-threonyl-[protein] + phosphate. Its function is as follows. Mitochondrial serine/threonine phosphatase that dephosphorylates various substrates and thus plays a role in different biological processes including cellular senescence or mitophagy. Modulates cellular senescence by regulating mitochondrial dynamics. Mechanistically, participates in mitochondrial fission through dephosphorylating DNM1L/DRP1. Additionally, dephosphorylates MFN2 in a stress-sensitive manner and consequently protects it from ubiquitination and degradation to promote mitochondrial network formation. Regulates mitophagy independent of PARKIN by interacting with and dephosphorylating FUNDC1, which interacts with LC3. Regulates anti-oxidative response by forming a tertiary complex with KEAP1 and NRF2. Regulates necroptosis by acting as a RIPK3 target and recruiting the RIPK1-RIPK3-MLKL necrosis 'attack' complex to mitochondria. The protein is Serine/threonine-protein phosphatase PGAM5, mitochondrial (Pgam5) of Mus musculus (Mouse).